Here is an 842-residue protein sequence, read N- to C-terminus: TATA box-binding protein-associated factor, RNA polymerase I, subunit C (842 aa).

Disordered stretches follow at residues 574 to 605, 667 to 690, and 702 to 842; these read SSLR…PSWT, RPGD…QQDE, and QAAA…RMGF. The span at 577-588 shows a compositional bias: basic and acidic residues; the sequence is REPDHPAPERPA. The segment covering 745 to 760 has biased composition (polar residues); the sequence is DASSAPHSQDLSNSEA. Basic and acidic residues predominate over residues 783-794; it reads QHERRQTLRDYM. Threonine 808 carries the post-translational modification Phosphothreonine. Residues 809 to 826 show a composition bias toward low complexity; the sequence is PPSQTSSRQTRSFRQQTP. Residues 833–842 are compositionally biased toward basic residues; the sequence is PPRKKPRMGF.

Component of the transcription factor SL1/TIF-IB complex, composed of TBP and at least TAF1A, TAF1B, TAF1C and TAF1D. In the complex interacts directly with TBP, TAF1A and TAF1B. Interaction of the SL1/TIF-IB subunits with TBP excludes interaction of TBP with the transcription factor IID (TFIID) subunits. Interacts with MYC and RRN3. Interacts with p53/TP53; the interaction prevents the association of SL1/TIF-IB with UBTF and represses RNA polymerase I transcription. Part of Pol I pre-initiation complex (PIC), in which Pol I core assembles with RRN3 and promoter-bound UTBF and SL1/TIF-IB complex.

It is found in the nucleus. Its subcellular location is the nucleolus. In terms of biological role, component of the transcription factor SL1/TIF-IB complex, which is involved in the assembly of the PIC (pre-initiation complex) during RNA polymerase I-dependent transcription. The rate of PIC formation probably is primarily dependent on the rate of association of SL1/TIF-IB with the rDNA promoter. SL1/TIF-IB is involved in stabilization of nucleolar transcription factor 1/UBTF on rDNA. Formation of SL1/TIF-IB excludes the association of TBP with TFIID subunits. Recruits RNA polymerase I to the rRNA gene promoter via interaction with RRN3. The chain is TATA box-binding protein-associated factor, RNA polymerase I, subunit C (Taf1c) from Rattus norvegicus (Rat).